The sequence spans 209 residues: Probable nicotinate-nucleotide adenylyltransferase (209 aa).

It belongs to the NadD family.

It catalyses the reaction nicotinate beta-D-ribonucleotide + ATP + H(+) = deamido-NAD(+) + diphosphate. The protein operates within cofactor biosynthesis; NAD(+) biosynthesis; deamido-NAD(+) from nicotinate D-ribonucleotide: step 1/1. Functionally, catalyzes the reversible adenylation of nicotinate mononucleotide (NaMN) to nicotinic acid adenine dinucleotide (NaAD). The protein is Probable nicotinate-nucleotide adenylyltransferase of Streptococcus pneumoniae serotype 4 (strain ATCC BAA-334 / TIGR4).